The primary structure comprises 284 residues: Probable 3-mercaptopyruvate sulfurtransferase (284 aa).

Rhodanese domains are found at residues 17–138 (SEPD…ALTN) and 168–281 (GQPG…RPVA). Arg182 is a binding site for substrate. The Cysteine persulfide intermediate role is filled by Cys241. The interval 241–247 (CGSGVTA) is substrate specificity.

It localises to the cytoplasm. It carries out the reaction 2-oxo-3-sulfanylpropanoate + [thioredoxin]-dithiol = [thioredoxin]-disulfide + hydrogen sulfide + pyruvate + H(+). In terms of biological role, catalyzes the transfer of sulfur from 3-mercaptopyruvate to a thiol-containing acceptor to form an intramolecular disulfide releasing hydrogen sulfide and pyruvate. This Pseudomonas aeruginosa (strain ATCC 15692 / DSM 22644 / CIP 104116 / JCM 14847 / LMG 12228 / 1C / PRS 101 / PAO1) protein is Probable 3-mercaptopyruvate sulfurtransferase (sseA).